Here is a 244-residue protein sequence, read N- to C-terminus: Phosphoadenosine 5'-phosphosulfate reductase (244 aa).

The active-site Nucleophile; cysteine thiosulfonate intermediate is Cys239.

It belongs to the PAPS reductase family. CysH subfamily.

The protein resides in the cytoplasm. It catalyses the reaction [thioredoxin]-disulfide + sulfite + adenosine 3',5'-bisphosphate + 2 H(+) = [thioredoxin]-dithiol + 3'-phosphoadenylyl sulfate. The protein operates within sulfur metabolism; hydrogen sulfide biosynthesis; sulfite from sulfate: step 3/3. Its function is as follows. Catalyzes the formation of sulfite from phosphoadenosine 5'-phosphosulfate (PAPS) using thioredoxin as an electron donor. This is Phosphoadenosine 5'-phosphosulfate reductase from Salmonella paratyphi A (strain AKU_12601).